The sequence spans 440 residues: ATP-dependent protease ATPase subunit HslU (440 aa).

ATP contacts are provided by residues V18, 60–65, D254, E319, and R391; that span reads GVGKTE.

Belongs to the ClpX chaperone family. HslU subfamily. A double ring-shaped homohexamer of HslV is capped on each side by a ring-shaped HslU homohexamer. The assembly of the HslU/HslV complex is dependent on binding of ATP.

It localises to the cytoplasm. Its function is as follows. ATPase subunit of a proteasome-like degradation complex; this subunit has chaperone activity. The binding of ATP and its subsequent hydrolysis by HslU are essential for unfolding of protein substrates subsequently hydrolyzed by HslV. HslU recognizes the N-terminal part of its protein substrates and unfolds these before they are guided to HslV for hydrolysis. The protein is ATP-dependent protease ATPase subunit HslU of Cellvibrio japonicus (strain Ueda107) (Pseudomonas fluorescens subsp. cellulosa).